The primary structure comprises 1002 residues: DNA-directed RNA polymerase 1B, mitochondrial (1002 aa).

The N-terminal 21 residues, 1–21 (MWRYISKHAYSRKFRNSHDSA), are a transit peptide targeting the mitochondrion. Active-site residues include Asp703, Lys778, and Asp935.

The protein belongs to the phage and mitochondrial RNA polymerase family.

It localises to the mitochondrion. The catalysed reaction is RNA(n) + a ribonucleoside 5'-triphosphate = RNA(n+1) + diphosphate. In terms of biological role, DNA-dependent RNA polymerase catalyzes the transcription of DNA into RNA using the four ribonucleoside triphosphates as substrates. The protein is DNA-directed RNA polymerase 1B, mitochondrial (RPOT1-TOM) of Nicotiana tabacum (Common tobacco).